The chain runs to 519 residues: Major facilitator superfamily domain-containing protein 8 (519 aa).

The segment at 1-25 is disordered; it reads MANLGSEAEREPLLGPGSPGSREWS. Topologically, residues 1–41 are cytoplasmic; the sequence is MANLGSEAEREPLLGPGSPGSREWSEIETQEHYKSRWKSVR. The short motif at 13–14 is the Dileucine internalization motif element; sequence LL. Residues 42–62 form a helical membrane-spanning segment; sequence ILYLTMFLSSVGFSIVIMSIW. The Extracellular portion of the chain corresponds to 63–75; the sequence is PYLQKIDQTADAS. The chain crosses the membrane as a helical span at residues 76–96; it reads FLGWVIASYSLGQMVASPLFG. Topologically, residues 97–106 are cytoplasmic; sequence LWSNYRPRKE. Residues 107–127 traverse the membrane as a helical segment; the sequence is PLIVSISISVAANCLYAYVHV. Over 128–140 the chain is Extracellular; sequence PAAHNKYYMLIAR. The chain crosses the membrane as a helical span at residues 141–161; sequence GLVGFGAGNVAVVRSYIAGAT. Residues 162–174 are Cytoplasmic-facing; it reads SLQERTNAMANTS. A helical membrane pass occupies residues 175-195; the sequence is TCQALGFILGPVFQTCFALIG. Over 196 to 212 the chain is Extracellular; that stretch reads EKGVTWDIIKLQVNMYT. The chain crosses the membrane as a helical span at residues 213–233; sequence APVLLAAFLGILNIILILFIL. Over 234-267 the chain is Cytoplasmic; the sequence is REHRVDDLGRQCKSVNFQEENTDEPQIPEGSIDQ. A helical membrane pass occupies residues 268–288; sequence VAVVATNIVFFVVLFIFAVYE. Topologically, residues 289 to 310 are extracellular; sequence TILTPLTLDMYAWTQEQAVLYD. A helical transmembrane segment spans residues 311–331; that stretch reads GILLVAFGVEAVLVFMGVKLL. Residues 332–338 are Cytoplasmic-facing; the sequence is SKKIGER. Residues 339 to 359 traverse the membrane as a helical segment; sequence AILLGGFVVVWVGFFILLPWG. The Extracellular portion of the chain corresponds to 360–416; the sequence is NQFPKIQWEDLHNSSTPNTTFGEIIIGLWNSSREDHSEQPTGCPIEQTWCLYTPVIH. N-linked (GlcNAc...) asparagine glycosylation is found at Asn-372 and Asn-377. A helical membrane pass occupies residues 417 to 439; it reads LAQFLTAAVLIGTGYPACSVMSY. The Cytoplasmic portion of the chain corresponds to 440-452; the sequence is TLYSKVLGPKPQG. The chain crosses the membrane as a helical span at residues 453-473; the sequence is IYMGWLTTSGSAARILGPVFI. Residues 474–483 are Extracellular-facing; sequence SHVYTYLGPR. The chain crosses the membrane as a helical span at residues 484 to 504; it reads WAFSLVCGIVVLTILLIGAVY. The Cytoplasmic segment spans residues 505-519; sequence KRLVAFSVRYMRIQE.

The protein belongs to the major facilitator superfamily.

It localises to the endosome membrane. The protein localises to the lysosome membrane. The catalysed reaction is chloride(in) = chloride(out). It catalyses the reaction iodide(out) = iodide(in). The enzyme catalyses fluoride(in) = fluoride(out). In terms of biological role, outward-rectifying chloride channel involved in endolysosomal chloride homeostasis, membrane fusion and function. Conducts chloride currents up to hundreds of picoamperes. Regulates lysosomal calcium content by reducing the lysosomal membrane potential, thereby activating TRPML1 channel and further release of lysosomal calcium ions. Regulates the pH in endolysosomal compartments and may contribute to progressive acidification from endosome to lysosome. Permeable to other halides such as iodide and fluoride ions. The chain is Major facilitator superfamily domain-containing protein 8 from Mus musculus (Mouse).